Here is a 333-residue protein sequence, read N- to C-terminus: MSKIIKIAVDAMGGDNSPKKIIDGINHHYKSNTNTFYQIFGDKEKIQNYINQLPTSSFEIIHTKDLVKGTDSPLEGAKRGKNTSMWLAIQSVKEKKSDIVISAGNTGALLVISKLNLKMIENIDKPALSALWPNKKNMSVVLDLGANIECSPKNLIDFSIMGSSLFKSLYPDDTAKVALLNIGSEEIKGNETIKETYQQLNQRNNTDFEFKGYIEGNQLMNGDVNVIVADGFTGNIALKTAEGTANFITSELKKAMTGNIVGKISSLLNISNLKKFKERLDPRLYNGAIFIGLDSPVIKSHGGTDYIGFSNSLSVCTRIVTGNLIEKIRNNIC.

The protein belongs to the PlsX family. Homodimer. Probably interacts with PlsY.

The protein localises to the cytoplasm. The enzyme catalyses a fatty acyl-[ACP] + phosphate = an acyl phosphate + holo-[ACP]. The protein operates within lipid metabolism; phospholipid metabolism. Its function is as follows. Catalyzes the reversible formation of acyl-phosphate (acyl-PO(4)) from acyl-[acyl-carrier-protein] (acyl-ACP). This enzyme utilizes acyl-ACP as fatty acyl donor, but not acyl-CoA. The sequence is that of Phosphate acyltransferase from Pelagibacter ubique (strain HTCC1062).